Reading from the N-terminus, the 158-residue chain is HVA22-like protein f (158 aa).

3 helical membrane passes run Gly2–Leu22, Gln41–Trp61, and Val63–Leu83.

This sequence belongs to the DP1 family.

Its subcellular location is the membrane. In Arabidopsis thaliana (Mouse-ear cress), this protein is HVA22-like protein f (HVA22F).